Consider the following 426-residue polypeptide: Histone-binding protein RBBP7 (426 aa).

WD repeat units follow at residues 47–123 (QWLP…KINH), 129–174 (RARY…LRLR), 182–218 (GLSW…KIVD), 229–270 (VVED…HSVD), 276–313 (VNCL…LHSF), 319–370 (EIFQ…LFIH), and 377–404 (ISDF…VWQM).

The protein belongs to the WD repeat RBAP46/RBAP48/MSI1 family. As to quaternary structure, binds directly to helix 1 of the histone fold of histone H4, a region that is not accessible when H4 is in chromatin.

It is found in the nucleus. Its function is as follows. Core histone-binding subunit that may target chromatin remodeling factors, histone acetyltransferases and histone deacetylases to their histone substrates in a manner that is regulated by nucleosomal DNA. Component of several complexes which regulate chromatin metabolism. In Danio rerio (Zebrafish), this protein is Histone-binding protein RBBP7 (rbbp7).